The sequence spans 182 residues: Mitochondrial FAD-linked sulfhydryl oxidase erv1 (182 aa).

Residues 75–177 (RLPDVAELGR…FNCQVWSKKA (103 aa)) enclose the ERV/ALR sulfhydryl oxidase domain. Residues 81–87 (ELGRSTW), histidine 91, and tyrosine 120 contribute to the FAD site. 2 cysteine pairs are disulfide-bonded: cysteine 122–cysteine 125 and cysteine 153–cysteine 170. FAD contacts are provided by residues 153–165 (CEAH…RLGK) and 176–177 (KA).

It depends on FAD as a cofactor.

It localises to the mitochondrion intermembrane space. It carries out the reaction 2 R'C(R)SH + O2 = R'C(R)S-S(R)CR' + H2O2. In terms of biological role, FAD-dependent sulfhydryl oxidase that catalyzes disulfide bond formation. Required for the import and folding of small cysteine-containing proteins in the mitochondrial intermembrane space (IMS). The protein is Mitochondrial FAD-linked sulfhydryl oxidase erv1 (erv1) of Schizosaccharomyces pombe (strain 972 / ATCC 24843) (Fission yeast).